The primary structure comprises 699 residues: 1,4-alpha-glucan-branching enzyme (699 aa).

Substrate contacts are provided by residues 59–60 (NE) and 88–90 (WAP). Trp-104 is a binding site for (1,4-alpha-D-glucosyl)n. 115–118 (DYGK) is a substrate binding site. A (1,4-alpha-D-glucosyl)n-binding site is contributed by Lys-140. Tyr-170 carries the post-translational modification Phosphotyrosine. 330–333 (EVLR) contributes to the substrate binding site. The active-site Nucleophile is Asp-354. Glu-409 acts as the Proton donor in catalysis.

Belongs to the glycosyl hydrolase 13 family. GlgB subfamily. Monomer.

The enzyme catalyses Transfers a segment of a (1-&gt;4)-alpha-D-glucan chain to a primary hydroxy group in a similar glucan chain.. Its pathway is glycan biosynthesis; glycogen biosynthesis. Functionally, glycogen-branching enzyme participates in the glycogen biosynthetic process along with glycogenin and glycogen synthase. Generates alpha-1,6-glucosidic branches from alpha-1,4-linked glucose chains, to increase solubility of the glycogen polymer. The protein is 1,4-alpha-glucan-branching enzyme (GBE1) of Felis catus (Cat).